The sequence spans 335 residues: Methionine import ATP-binding protein MetN (335 aa).

Residues 2–241 (IQFQRLHKSY…PQHPTTRRFV (240 aa)) form the ABC transporter domain. 38-45 (GHSGAGKS) is an ATP binding site.

The protein belongs to the ABC transporter superfamily. Methionine importer (TC 3.A.1.24) family. The complex is composed of two ATP-binding proteins (MetN), two transmembrane proteins (MetI) and a solute-binding protein (MetQ).

It is found in the cell inner membrane. It carries out the reaction L-methionine(out) + ATP + H2O = L-methionine(in) + ADP + phosphate + H(+). The enzyme catalyses D-methionine(out) + ATP + H2O = D-methionine(in) + ADP + phosphate + H(+). In terms of biological role, part of the ABC transporter complex MetNIQ involved in methionine import. Responsible for energy coupling to the transport system. This chain is Methionine import ATP-binding protein MetN, found in Xanthomonas campestris pv. campestris (strain 8004).